A 207-amino-acid polypeptide reads, in one-letter code: MMMTRLETLKNNLQAAFGQDLALTESLGELTLEVAAEQWFSACTKLRTDPALRFESCIDLCGVDYLTWGNGTQPEEKTGPVTRGRYAVVVHLLSIEHNWRLRVRTWAPDDEFPMVSSLLECWPGVNWFEREAFDLYGIVFEGHPDLRRILTDYGFIGHPFRKDFPLSGTVEMRYDPEQKRVIYQPVTIDPREITPRVVREDSYGMGR.

Belongs to the complex I 30 kDa subunit family. As to quaternary structure, NDH-1 is composed of 14 different subunits. Subunits NuoB, C, D, E, F, and G constitute the peripheral sector of the complex.

Its subcellular location is the cell inner membrane. The catalysed reaction is a quinone + NADH + 5 H(+)(in) = a quinol + NAD(+) + 4 H(+)(out). Its function is as follows. NDH-1 shuttles electrons from NADH, via FMN and iron-sulfur (Fe-S) centers, to quinones in the respiratory chain. The immediate electron acceptor for the enzyme in this species is believed to be ubiquinone. Couples the redox reaction to proton translocation (for every two electrons transferred, four hydrogen ions are translocated across the cytoplasmic membrane), and thus conserves the redox energy in a proton gradient. In Bordetella pertussis (strain Tohama I / ATCC BAA-589 / NCTC 13251), this protein is NADH-quinone oxidoreductase subunit C.